Consider the following 390-residue polypeptide: Prostaglandin E2 receptor EP3 subtype (390 aa).

At 1 to 53 (MKETRGYGGDAPFCTRLNHSYTGMWAPERSAEARGNLTRPPGSGEDCGSVSVA) the chain is on the extracellular side. N-linked (GlcNAc...) asparagine glycans are attached at residues Asn18 and Asn36. The chain crosses the membrane as a helical span at residues 54-78 (FPITMLLTGFVGNALAMLLVSRSYR). The Cytoplasmic portion of the chain corresponds to 79 to 91 (RRESKRKKSFLLC). Residues 92 to 112 (IGWLALTDLVGQLLTTPVVIV) traverse the membrane as a helical segment. The Extracellular portion of the chain corresponds to 113–131 (VYLSKQRWEHIDPSGRLCT). The helical transmembrane segment at 132–153 (FFGLTMTVFGLSSLFIASAMAV) threads the bilayer. Residues 154–175 (ERALAIRAPHWYASHMKTRATR) lie on the Cytoplasmic side of the membrane. The helical transmembrane segment at 176–197 (AVLLGVWLAVLAFALLPVLGVG) threads the bilayer. Over 198–227 (QYTVQWPGTWCFISTGRGGNGTSSSHNWGN) the chain is Extracellular. A helical membrane pass occupies residues 228-253 (LFFASAFAFLGLLALTVTFSCNLATI). Residues 254–283 (KALVSRCRAKATASQSSAQWGRITTETAIQ) are Cytoplasmic-facing. Residues 284–307 (LMGIMCVLSVCWSPLLIMMLKMIF) traverse the membrane as a helical segment. At 308 to 327 (NQTSVEHCKTHTEKQKECNF) the chain is on the extracellular side. Residues 328–349 (FLIAVRLASLNQILDPWVYLLL) form a helical membrane-spanning segment. The Cytoplasmic segment spans residues 350 to 390 (RKILLRKFCQIRYHTNNYASSSTSLPCQCSSTLMWSDHLER).

This sequence belongs to the G-protein coupled receptor 1 family. As to quaternary structure, interacts (via C-terminus) with MKLN1. In terms of tissue distribution, detected in kidney. Expressed in small intestine, heart, pancreas, gastric fundic mucosa, mammary artery and pulmonary vessels.

It localises to the cell membrane. Functionally, receptor for prostaglandin E2 (PGE2). The activity of this receptor can couple to both the inhibition of adenylate cyclase mediated by G(i) proteins, and to an elevation of intracellular calcium. Required for normal development of fever in response to pyrinogens, including IL1B, prostaglandin E2 and bacterial lipopolysaccharide (LPS). Required for normal potentiation of platelet aggregation by prostaglandin E2, and thus plays a role in the regulation of blood coagulation. Required for increased HCO3(-) secretion in the duodenum in response to mucosal acidification, and thereby contributes to the protection of the mucosa against acid-induced ulceration. Not required for normal kidney function, normal urine volume and osmolality. The sequence is that of Prostaglandin E2 receptor EP3 subtype (PTGER3) from Homo sapiens (Human).